The sequence spans 577 residues: Arginine--tRNA ligase (577 aa).

The short motif at P122–H132 is the 'HIGH' region element.

The protein belongs to the class-I aminoacyl-tRNA synthetase family. As to quaternary structure, monomer.

Its subcellular location is the cytoplasm. It carries out the reaction tRNA(Arg) + L-arginine + ATP = L-arginyl-tRNA(Arg) + AMP + diphosphate. The protein is Arginine--tRNA ligase of Vibrio parahaemolyticus serotype O3:K6 (strain RIMD 2210633).